We begin with the raw amino-acid sequence, 344 residues long: Phosphate acyltransferase (344 aa).

The protein belongs to the PlsX family. In terms of assembly, homodimer. Probably interacts with PlsY.

The protein resides in the cytoplasm. The enzyme catalyses a fatty acyl-[ACP] + phosphate = an acyl phosphate + holo-[ACP]. The protein operates within lipid metabolism; phospholipid metabolism. Catalyzes the reversible formation of acyl-phosphate (acyl-PO(4)) from acyl-[acyl-carrier-protein] (acyl-ACP). This enzyme utilizes acyl-ACP as fatty acyl donor, but not acyl-CoA. This is Phosphate acyltransferase from Sphingopyxis alaskensis (strain DSM 13593 / LMG 18877 / RB2256) (Sphingomonas alaskensis).